The chain runs to 613 residues: DNA mismatch repair protein MutL (613 aa).

It belongs to the DNA mismatch repair MutL/HexB family.

Functionally, this protein is involved in the repair of mismatches in DNA. It is required for dam-dependent methyl-directed DNA mismatch repair. May act as a 'molecular matchmaker', a protein that promotes the formation of a stable complex between two or more DNA-binding proteins in an ATP-dependent manner without itself being part of a final effector complex. This chain is DNA mismatch repair protein MutL, found in Janthinobacterium sp. (strain Marseille) (Minibacterium massiliensis).